The chain runs to 306 residues: 4-diphosphocytidyl-2-C-methyl-D-erythritol kinase (306 aa).

Lys11 is a catalytic residue. 98–108 (PIAGGMGGGSA) serves as a coordination point for ATP. The active site involves Asp140.

The protein belongs to the GHMP kinase family. IspE subfamily.

The catalysed reaction is 4-CDP-2-C-methyl-D-erythritol + ATP = 4-CDP-2-C-methyl-D-erythritol 2-phosphate + ADP + H(+). It functions in the pathway isoprenoid biosynthesis; isopentenyl diphosphate biosynthesis via DXP pathway; isopentenyl diphosphate from 1-deoxy-D-xylulose 5-phosphate: step 3/6. In terms of biological role, catalyzes the phosphorylation of the position 2 hydroxy group of 4-diphosphocytidyl-2C-methyl-D-erythritol. The polypeptide is 4-diphosphocytidyl-2-C-methyl-D-erythritol kinase (Leifsonia xyli subsp. xyli (strain CTCB07)).